Consider the following 344-residue polypeptide: N-acetyl-gamma-glutamyl-phosphate reductase 1 (344 aa).

The active site involves cysteine 150.

The protein belongs to the NAGSA dehydrogenase family. Type 1 subfamily.

It is found in the cytoplasm. It carries out the reaction N-acetyl-L-glutamate 5-semialdehyde + phosphate + NADP(+) = N-acetyl-L-glutamyl 5-phosphate + NADPH + H(+). Its pathway is amino-acid biosynthesis; L-arginine biosynthesis; N(2)-acetyl-L-ornithine from L-glutamate: step 3/4. Functionally, catalyzes the NADPH-dependent reduction of N-acetyl-5-glutamyl phosphate to yield N-acetyl-L-glutamate 5-semialdehyde. The protein is N-acetyl-gamma-glutamyl-phosphate reductase 1 of Pseudomonas putida (strain ATCC 47054 / DSM 6125 / CFBP 8728 / NCIMB 11950 / KT2440).